Here is a 209-residue protein sequence, read N- to C-terminus: Cyclin-dependent kinase inhibitor 2 (209 aa).

A required for nuclear localization region spans residues 1–32; that stretch reads MAAVRRRERDVVEENGVTTTTVKRRKMEEEVD.

Belongs to the CDI family. ICK/KRP subfamily. As to quaternary structure, specifically interacts with CDKA-1, but not with CDKB1-1. Phosphorylated.

It localises to the nucleus. The protein resides in the nucleoplasm. Its function is as follows. Binds and inhibits CYCD2-1/CDKA-1 complex kinase activity. Regulates cell division which is crucial for plant growth, development and morphogenesis. May regulate early lateral root initiation by blocking the G1/S phase transition. Controls the mitosis-to-endocycle transition and the onset of the endoreduplication cycle during leaf development through inhibition of mitotic CDKA-1 kinase complexes. Specifically targets CDKA-1. The polypeptide is Cyclin-dependent kinase inhibitor 2 (KRP2) (Arabidopsis thaliana (Mouse-ear cress)).